A 450-amino-acid polypeptide reads, in one-letter code: Glutamate--tRNA ligase 2 (450 aa).

The 'HIGH' region signature appears at proline 10–asparagine 20. The 'KMSKS' region motif lies at glycine 243 to arginine 247. Lysine 246 provides a ligand contact to ATP.

This sequence belongs to the class-I aminoacyl-tRNA synthetase family. Glutamate--tRNA ligase type 1 subfamily. As to quaternary structure, monomer.

The protein resides in the cytoplasm. The enzyme catalyses tRNA(Glu) + L-glutamate + ATP = L-glutamyl-tRNA(Glu) + AMP + diphosphate. In terms of biological role, catalyzes the attachment of glutamate to tRNA(Glu) in a two-step reaction: glutamate is first activated by ATP to form Glu-AMP and then transferred to the acceptor end of tRNA(Glu). The protein is Glutamate--tRNA ligase 2 of Beijerinckia indica subsp. indica (strain ATCC 9039 / DSM 1715 / NCIMB 8712).